A 270-amino-acid polypeptide reads, in one-letter code: Phosphatidylglycerol--prolipoprotein diacylglyceryl transferase (270 aa).

Transmembrane regions (helical) follow at residues 19–39 (FPVY…LWLA), 53–73 (FVDL…AYYV), 92–112 (QGGL…IIYA), and 117–137 (ISFW…QAIG). An a 1,2-diacyl-sn-glycero-3-phospho-(1'-sn-glycerol)-binding site is contributed by Arg138. A run of 3 helical transmembrane segments spans residues 178–198 (HPTF…LLLL), 206–226 (GELF…VEEL), and 236–256 (LRIA…FIIV).

It belongs to the Lgt family.

It is found in the cell membrane. The enzyme catalyses L-cysteinyl-[prolipoprotein] + a 1,2-diacyl-sn-glycero-3-phospho-(1'-sn-glycerol) = an S-1,2-diacyl-sn-glyceryl-L-cysteinyl-[prolipoprotein] + sn-glycerol 1-phosphate + H(+). It participates in protein modification; lipoprotein biosynthesis (diacylglyceryl transfer). Its function is as follows. Catalyzes the transfer of the diacylglyceryl group from phosphatidylglycerol to the sulfhydryl group of the N-terminal cysteine of a prolipoprotein, the first step in the formation of mature lipoproteins. In Bacillus cytotoxicus (strain DSM 22905 / CIP 110041 / 391-98 / NVH 391-98), this protein is Phosphatidylglycerol--prolipoprotein diacylglyceryl transferase.